Consider the following 3814-residue polypeptide: Hybrid PKS-NRPS synthetase pyvA (3814 aa).

Positions 1-340 (MDPQQRLLLE…GSNAHVILES (340 aa)) constitute a Ketosynthase family 3 (KS3) domain. Catalysis depends on for beta-ketoacyl synthase activity residues C87, H222, and H261. The tract at residues 441–758 (VFTGQGAQWH…PYFASLSRGV (318 aa)) is malonyl-CoA:ACP transacylase (MAT) domain. Residue S533 is the For malonyltransferase activity of the active site. The segment at 835–970 (HPILGAKMPG…GLISISTATT (136 aa)) is N-terminal hotdog fold. A dehydratase (DH) domain region spans residues 835–1149 (HPILGAKMPG…LRLTSLSNGR (315 aa)). The PKS/mFAS DH domain occupies 835 to 1151 (HPILGAKMPG…LTSLSNGRAA (317 aa)). H867 acts as the Proton acceptor; for dehydratase activity in catalysis. The segment at 970 to 993 (TADGAPSRKPYRQHPQPQPGRMST) is disordered. The segment at 991 to 1151 (MSTASFPAQS…LTSLSNGRAA (161 aa)) is C-terminal hotdog fold. D1057 functions as the Proton donor; for dehydratase activity in the catalytic mechanism. Positions 1520–1836 (GLLETLVWED…MGRHTGKVVL (317 aa)) are enoyl reductase (ER) domain. The interval 1864-2036 (TYLLVGGLGG…PASSMNCGRI (173 aa)) is ketoreductase (KR) domain. The Carrier 1 domain maps to 2141-2220 (IDLSDRVALL…ALVEKAIGLF (80 aa)). S2180 carries the post-translational modification O-(pantetheine 4'-phosphoryl)serine. Residues 2228 to 2238 (QQQQQSVQSSS) show a composition bias toward low complexity. A disordered region spans residues 2228–2270 (QQQQQSVQSSSAPSNDDQSPTFNKNLDSQDPSTSLQIPKADCS). Positions 2239 to 2263 (APSNDDQSPTFNKNLDSQDPSTSLQ) are enriched in polar residues. Positions 2273 to 2718 (LPMSTFQNRL…PEVRLAGTLE (446 aa)) are condensation (C) domain 7. The interval 2738–3149 (PLNLPRRIVE…DGQLEFLGRI (412 aa)) is adenylation (A) domain 8. Residues 3257–3304 (SGKTDRRALGASQAPGTPPQHGAGPAAASTLDPAQAQAQDRADEEVGD) are disordered. Residues 3304 to 3379 (DRTMATVTRV…QLVELVHSKV (76 aa)) enclose the Carrier 2 domain. Residue S3339 is modified to O-(pantetheine 4'-phosphoryl)serine. The segment at 3428–3680 (MTGAESFTGI…VDLVPVNYLT (253 aa)) is thioesterase (TE) domain.

It in the C-terminal section; belongs to the NRP synthetase family.

The protein operates within secondary metabolite biosynthesis. Functionally, hybrid PKS-NRPS synthetase; part of the gene cluster that mediates the biosynthesis of pyranoviolin A, a pyranonigrin analog with a C-3 methoxy group. Initially, the PKS portion of pyvA synthesizes C-10 carbon chain from 5 molecules of malonyl-CoA, which is then condensed with the thiolation (T) domain-bound glycine activated by the adenylation (A) domain. The subsequent chain release by Dieckmann condensation (DKC) could be catalyzed by the TE domain present at the C-terminus of pyvA and/or the alpha/beta hydrolase pyvD, installing the tetramic acid moiety. The FAD-dependent monooxygenase pyvC next epoxidizes one of the olefins of the polyketide part, and the epoxide ring-opening induces the dihydro-gamma-pyrone ring formation. The cytochrome P450 monooxygeanse pyvB would be responsible for the 2 consecutive reactions, in which the dihydro-gamma-pyrone is oxidized to gamma-pyrone and C-7 is hydroxylated to yield pyranonigrin F. Finally, the O-methyltransferase pyvH methylates the C-3 hydroxy group to complete the biosynthesis. The protein is Hybrid PKS-NRPS synthetase pyvA of Aspergillus violaceofuscus (strain CBS 115571).